Consider the following 130-residue polypeptide: MSMQDPIADMLTRIRNGQAANKVAVTMPSSKLKVAIANVLKEEGYIEDFKIEGDTKPELEITLKYFQGKAVVESIQRVSRPSLRIYKRKDELPQVMAGLGIAVVSTSKGVMTDRAARQAGLGGEIICYVA.

The protein belongs to the universal ribosomal protein uS8 family. Part of the 30S ribosomal subunit. Contacts proteins S5 and S12.

Its function is as follows. One of the primary rRNA binding proteins, it binds directly to 16S rRNA central domain where it helps coordinate assembly of the platform of the 30S subunit. This is Small ribosomal subunit protein uS8 from Proteus mirabilis (strain HI4320).